Reading from the N-terminus, the 540-residue chain is Chaperonin GroEL (540 aa).

Residues Thr-29 to Pro-32, Asp-86 to Thr-90, Gly-413, Asp-477 to Leu-479, and Asp-493 each bind ATP.

This sequence belongs to the chaperonin (HSP60) family. As to quaternary structure, forms a cylinder of 14 subunits composed of two heptameric rings stacked back-to-back. Interacts with the co-chaperonin GroES.

The protein resides in the cytoplasm. It carries out the reaction ATP + H2O + a folded polypeptide = ADP + phosphate + an unfolded polypeptide.. Together with its co-chaperonin GroES, plays an essential role in assisting protein folding. The GroEL-GroES system forms a nano-cage that allows encapsulation of the non-native substrate proteins and provides a physical environment optimized to promote and accelerate protein folding. In Clostridium botulinum (strain Alaska E43 / Type E3), this protein is Chaperonin GroEL.